Here is a 321-residue protein sequence, read N- to C-terminus: Ribose-phosphate pyrophosphokinase 1 (321 aa).

4 residues coordinate Mg(2+): aspartate 131, histidine 133, aspartate 142, and aspartate 146.

Belongs to the ribose-phosphate pyrophosphokinase family.

The catalysed reaction is D-ribose 5-phosphate + ATP = 5-phospho-alpha-D-ribose 1-diphosphate + AMP + H(+). In Candida albicans (Yeast), this protein is Ribose-phosphate pyrophosphokinase 1 (PRS1).